The following is a 1813-amino-acid chain: Nonribosomal peptide synthetase 1 (1813 aa).

The interval 89 to 494 (EKARRDPSRQ…GRGDQQVKLR (406 aa)) is adenylation. A Carrier 1 domain is found at 624 to 699 (EPQSERERQL…ELAITLKHSD (76 aa)). At S660 the chain carries O-(pantetheine 4'-phosphoryl)serine. Positions 738–1159 (DVYPCTTLQE…LPMTDDELAE (422 aa)) are condensation 1. A Carrier 2 domain is found at 1282–1358 (QVTTPKQQKL…DMADIAKESL (77 aa)). At S1319 the chain carries O-(pantetheine 4'-phosphoryl)serine. Positions 1427 to 1806 (FYLDAAVDQS…STLFQTDVME (380 aa)) are condensation 2.

Belongs to the NRP synthetase family.

Its pathway is siderophore biosynthesis. Functionally, nonribosomal peptide synthetase; part of the gene cluster that mediates the biosynthesis of hydroxamate-containing siderophores that play a critical role in virulence via intracellular iron acquisition during macrophage infection. The protein is Nonribosomal peptide synthetase 1 of Ajellomyces capsulatus (Darling's disease fungus).